We begin with the raw amino-acid sequence, 654 residues long: Bifunctional polymyxin resistance protein ArnA (654 aa).

A formyltransferase ArnAFT region spans residues 1–303 (MKVIVFAYHE…NISRIKGKKL (303 aa)). Catalysis depends on H105, which acts as the Proton donor; for formyltransferase activity. Residue 137–141 (TKKID) participates in (6R)-10-formyltetrahydrofolate binding. A dehydrogenase ArnADH region spans residues 313 to 654 (NLKKILILGV…INFFINNNTS (342 aa)). Residues D346 and 367–368 (DI) each bind NAD(+). UDP-alpha-D-glucuronate contacts are provided by residues A392, Y397, and 431–432 (TS). E433 (proton acceptor; for decarboxylase activity) is an active-site residue. UDP-alpha-D-glucuronate-binding positions include R459, N491, 532–534 (QKR), and Y612. R618 acts as the Proton donor; for decarboxylase activity in catalysis.

It in the N-terminal section; belongs to the Fmt family. UDP-L-Ara4N formyltransferase subfamily. This sequence in the C-terminal section; belongs to the NAD(P)-dependent epimerase/dehydratase family. UDP-glucuronic acid decarboxylase subfamily. In terms of assembly, homohexamer, formed by a dimer of trimers.

The enzyme catalyses UDP-alpha-D-glucuronate + NAD(+) = UDP-beta-L-threo-pentopyranos-4-ulose + CO2 + NADH. The catalysed reaction is UDP-4-amino-4-deoxy-beta-L-arabinose + (6R)-10-formyltetrahydrofolate = UDP-4-deoxy-4-formamido-beta-L-arabinose + (6S)-5,6,7,8-tetrahydrofolate + H(+). The protein operates within nucleotide-sugar biosynthesis; UDP-4-deoxy-4-formamido-beta-L-arabinose biosynthesis; UDP-4-deoxy-4-formamido-beta-L-arabinose from UDP-alpha-D-glucuronate: step 1/3. It functions in the pathway nucleotide-sugar biosynthesis; UDP-4-deoxy-4-formamido-beta-L-arabinose biosynthesis; UDP-4-deoxy-4-formamido-beta-L-arabinose from UDP-alpha-D-glucuronate: step 3/3. Its pathway is bacterial outer membrane biogenesis; lipopolysaccharide biosynthesis. Bifunctional enzyme that catalyzes the oxidative decarboxylation of UDP-glucuronic acid (UDP-GlcUA) to UDP-4-keto-arabinose (UDP-Ara4O) and the addition of a formyl group to UDP-4-amino-4-deoxy-L-arabinose (UDP-L-Ara4N) to form UDP-L-4-formamido-arabinose (UDP-L-Ara4FN). The modified arabinose is attached to lipid A and is required for resistance to polymyxin and cationic antimicrobial peptides. This is Bifunctional polymyxin resistance protein ArnA from Wigglesworthia glossinidia brevipalpis.